A 135-amino-acid polypeptide reads, in one-letter code: ATP synthase epsilon chain (135 aa).

It belongs to the ATPase epsilon chain family. F-type ATPases have 2 components, CF(1) - the catalytic core - and CF(0) - the membrane proton channel. CF(1) has five subunits: alpha(3), beta(3), gamma(1), delta(1), epsilon(1). CF(0) has three main subunits: a, b and c.

Its subcellular location is the cell inner membrane. Produces ATP from ADP in the presence of a proton gradient across the membrane. This chain is ATP synthase epsilon chain, found in Hyphomonas neptunium (strain ATCC 15444).